The primary structure comprises 323 residues: Ig gamma chain C region (323 aa).

3 Ig-like domains span residues 6–96 (PSVF…KTVA), 114–213 (PSVF…KTIS), and 222–318 (PKVY…KSIS).

This Oryctolagus cuniculus (Rabbit) protein is Ig gamma chain C region.